Consider the following 307-residue polypeptide: CRISPR-associated endonuclease Cas1 2 (307 aa).

Glu-142, His-206, and Glu-221 together coordinate Mn(2+).

This sequence belongs to the CRISPR-associated endonuclease Cas1 family. As to quaternary structure, homodimer, forms a heterotetramer with a Cas2 homodimer. Forms oligomers, probably binds nucleic acids as a homodimer. Requires Mg(2+) as cofactor. Mn(2+) is required as a cofactor.

Functionally, CRISPR (clustered regularly interspaced short palindromic repeat), is an adaptive immune system that provides protection against mobile genetic elements (viruses, transposable elements and conjugative plasmids). CRISPR clusters contain spacers, sequences complementary to antecedent mobile elements, and target invading nucleic acids. CRISPR clusters are transcribed and processed into CRISPR RNA (crRNA). Acts as a dsDNA endonuclease. Involved in the integration of spacer DNA into the CRISPR cassette. Its function is as follows. In vitro catalyzes a concerted transesterification reaction on branched DNA, as would be expected during integration of protospacers into the CRISPR leader sequence; Cas2 is not required in vitro. This reaction requires a 3'-OH group at the branch point. Binds ss- and dsDNA and ss- and dsRNA with approximately equal affinity. May be able to anneal complementary DNA strands. In Saccharolobus solfataricus (strain ATCC 35092 / DSM 1617 / JCM 11322 / P2) (Sulfolobus solfataricus), this protein is CRISPR-associated endonuclease Cas1 2.